A 424-amino-acid polypeptide reads, in one-letter code: Tyrosine--tRNA ligase (424 aa).

An L-tyrosine-binding site is contributed by Tyr37. The 'HIGH' region motif lies at Pro42–His51. L-tyrosine is bound by residues Tyr175 and Gln179. A 'KMSKS' region motif is present at residues Lys235–Thr239. Position 238 (Lys238) interacts with ATP. The 58-residue stretch at Ala357–Gly414 folds into the S4 RNA-binding domain.

Belongs to the class-I aminoacyl-tRNA synthetase family. TyrS type 1 subfamily. In terms of assembly, homodimer.

Its subcellular location is the cytoplasm. It catalyses the reaction tRNA(Tyr) + L-tyrosine + ATP = L-tyrosyl-tRNA(Tyr) + AMP + diphosphate + H(+). In terms of biological role, catalyzes the attachment of tyrosine to tRNA(Tyr) in a two-step reaction: tyrosine is first activated by ATP to form Tyr-AMP and then transferred to the acceptor end of tRNA(Tyr). This chain is Tyrosine--tRNA ligase, found in Yersinia pestis bv. Antiqua (strain Antiqua).